The sequence spans 83 residues: UPF0297 protein LCK_00468 (83 aa).

The protein belongs to the UPF0297 family.

This is UPF0297 protein LCK_00468 from Leuconostoc citreum (strain KM20).